Consider the following 949-residue polypeptide: AP-1 complex subunit beta-1 (949 aa).

Position 318 is an N6-acetyllysine (Lys318). Tyr574 carries the post-translational modification 3'-nitrotyrosine. A disordered region spans residues 584–625; it reads GGRGVVHKSLPPRTASSESAESPETAPTGAPPGEQPDVIPAQ. Over residues 594 to 611 the composition is skewed to low complexity; it reads PPRTASSESAESPETAPT.

Belongs to the adaptor complexes large subunit family. Adaptor protein complex 1 (AP-1) is a heterotetramer composed of two large adaptins (gamma-type subunit AP1G1 and beta-type subunit AP1B1), a medium adaptin (mu-type subunit AP1M1 or AP1M2) and a small adaptin (sigma-type subunit AP1S1 or AP1S2 or AP1S3). In terms of tissue distribution, widely expressed.

The protein localises to the golgi apparatus. Its subcellular location is the cytoplasmic vesicle. It localises to the clathrin-coated vesicle membrane. Subunit of clathrin-associated adaptor protein complex 1 that plays a role in protein sorting in the late-Golgi/trans-Golgi network (TGN) and/or endosomes. The AP complexes mediate both the recruitment of clathrin to membranes and the recognition of sorting signals within the cytosolic tails of transmembrane cargo molecules. This chain is AP-1 complex subunit beta-1 (AP1B1), found in Homo sapiens (Human).